The following is a 457-amino-acid chain: MDHLPIFCQLRHRACLLVGGGDVAERKARLLLEAGAALTVNALAFAPQFKAWAKQGMLRLVQGEFNASLLDDCWLAIAATDDDAVNNQVSEAAEARRIFCNVVDAPKQASFIMPSIIDRSPLMVAISSGGTSPVLARLLREKLEALLPQHLGKVAGYAGQLRRRVKQTFTSMSERRRFWEKFFVNDRLAQSLANDDEQAVTRITETLLSEPLDDRGEVVLVGAGPGDPGLLTLKGLQQIQQADIVVYDRLVSDEIMNLVRRDADRVFVGKRAGYHCVPQEEINQILLREAQRGKRVVRLKGGDPFIFGRGGEELETLCDAGIPFSVVPGITAASGCSAYAGLPLTHRDYAQSVRLITGHLKNGGEFDWHNLAAEKQTLVFYMGLNQAAAIQEKLIEHGMDPQMPVALVENGTSVKQRVVAGVLTELGALAQRVESPSLIIVGRVVALRDKLNWFSSK.

Positions 1–204 (MDHLPIFCQL…DDEQAVTRIT (204 aa)) are precorrin-2 dehydrogenase /sirohydrochlorin ferrochelatase. NAD(+) contacts are provided by residues 22 to 23 (DV) and 43 to 44 (LA). The residue at position 128 (Ser128) is a Phosphoserine. Residues 216 to 457 (GEVVLVGAGP…RDKLNWFSSK (242 aa)) form a uroporphyrinogen-III C-methyltransferase region. Pro225 provides a ligand contact to S-adenosyl-L-methionine. Asp248 (proton acceptor) is an active-site residue. Catalysis depends on Lys270, which acts as the Proton donor. Residues 301–303 (GGD), Ile306, 331–332 (TA), Met382, and Gly411 each bind S-adenosyl-L-methionine.

It in the N-terminal section; belongs to the precorrin-2 dehydrogenase / sirohydrochlorin ferrochelatase family. In the C-terminal section; belongs to the precorrin methyltransferase family.

The enzyme catalyses uroporphyrinogen III + 2 S-adenosyl-L-methionine = precorrin-2 + 2 S-adenosyl-L-homocysteine + H(+). It carries out the reaction precorrin-2 + NAD(+) = sirohydrochlorin + NADH + 2 H(+). The catalysed reaction is siroheme + 2 H(+) = sirohydrochlorin + Fe(2+). The protein operates within cofactor biosynthesis; adenosylcobalamin biosynthesis; precorrin-2 from uroporphyrinogen III: step 1/1. It functions in the pathway cofactor biosynthesis; adenosylcobalamin biosynthesis; sirohydrochlorin from precorrin-2: step 1/1. It participates in porphyrin-containing compound metabolism; siroheme biosynthesis; precorrin-2 from uroporphyrinogen III: step 1/1. Its pathway is porphyrin-containing compound metabolism; siroheme biosynthesis; siroheme from sirohydrochlorin: step 1/1. The protein operates within porphyrin-containing compound metabolism; siroheme biosynthesis; sirohydrochlorin from precorrin-2: step 1/1. In terms of biological role, multifunctional enzyme that catalyzes the SAM-dependent methylations of uroporphyrinogen III at position C-2 and C-7 to form precorrin-2 via precorrin-1. Then it catalyzes the NAD-dependent ring dehydrogenation of precorrin-2 to yield sirohydrochlorin. Finally, it catalyzes the ferrochelation of sirohydrochlorin to yield siroheme. This Cronobacter sakazakii (strain ATCC BAA-894) (Enterobacter sakazakii) protein is Siroheme synthase 2.